Consider the following 239-residue polypeptide: Large ribosomal subunit protein uL30 (239 aa).

The tract at residues 1-37 is disordered; sequence MSKFVPENVQKKLARDEKLRKAKAEQRKASSAQMKQR. The span at 9–28 shows a compositional bias: basic and acidic residues; that stretch reads VQKKLARDEKLRKAKAEQRK.

It belongs to the universal ribosomal protein uL30 family.

The sequence is that of Large ribosomal subunit protein uL30 (RPL7) from Tetrahymena thermophila.